The sequence spans 942 residues: MQNKIIIHGARAHNLKNIDVEIPRDKLVIVTGLSGSGKSSLAFDTIYAEGQRRYVESLSAYARQFLGNMEKPDVDSIDGLSPAISIDQKTTSKNPRSTVGTVTEINDYLRLLYARVGTPYCINGHGAITASSAEQIVEQVLALPERTRMQILAPIVRRKKGQHKTIFEKIQKDGYVRVRVDGDIFDVTEVPELSKSKMHNIEVVIDRLVNKDGIRSRLFDSVEAALRLGDGYLMIDTMDGNELLFSEHYSCPVCGFTVPELEPRLFSFNAPFGSCPTCDGLGIKLEVDLDLVVPDPSKSLKEGALAPWNPISSNYYPTMLEQAMASFGVDMDTPFEALTEEERDLVLYGSGDREFHFHYVNDFGGERNIDIPFEGVVTNVNRRYHETNSDYTRNVMRGYMNELTCATCHGYRLNDQALCVHVGGEEGPHIGQISELSIADHLQLLEELELTENESTIAKPIVKEIHDRLTFLNNVGLNYLTLSRAAGTLSGGESQRIRLATQIGSNLSGVLYILDEPSIGLHQRDNDRLIESLKKMRDLGNTLIVVEHDEDTMMQADWLIDVGPGAGEFGGEIIASGTPKQVAKNKKSITGQYLSGKKFIPVPLERRSGNGRFIEIKGAAQNNLQSLDVRFPLGKFIAVTGVSGSGKSTLVNSILKKAVAQKLNRNADKPGKYHSISGIEHIERLIDIDQSPIGRTPRSNPATYTGVFDDIRDLFAQTNEAKIRGYKKGRFSFNVKGGRCEACSGDGIIKIEMHFLPDVYVPCEVCHGRRYNSETLEVHYKEKNIAEVLDMTVDDALVFFSAIPKIARKIQTIKDVGLGYVTLGQPATTLSGGEAQRMKLASELHKRSTGKSLYILDEPTTGLHTDDIARLLKVLERFVDDGNTVLVIEHNLDVIKSADHIIDLGPEGGVGGGQIVATGTPEEVAQVKESYTGHYLKVKLQQ.

G32–S39 is an ATP binding site. Residues C251–C278 form a C4-type zinc finger. 2 consecutive ABC transporter domains span residues W308–I589 and G609–K937. G641 to S648 lines the ATP pocket. A C4-type zinc finger spans residues C740–C766.

It belongs to the ABC transporter superfamily. UvrA family. In terms of assembly, forms a heterotetramer with UvrB during the search for lesions.

It localises to the cytoplasm. Functionally, the UvrABC repair system catalyzes the recognition and processing of DNA lesions. UvrA is an ATPase and a DNA-binding protein. A damage recognition complex composed of 2 UvrA and 2 UvrB subunits scans DNA for abnormalities. When the presence of a lesion has been verified by UvrB, the UvrA molecules dissociate. The polypeptide is UvrABC system protein A (Streptococcus pyogenes serotype M18 (strain MGAS8232)).